The following is a 202-amino-acid chain: Small ribosomal subunit protein uS4 (202 aa).

A compositionally biased stretch (basic residues) spans 1–13 (MSRYRGPRLRVTR). A disordered region spans residues 1–42 (MSRYRGPRLRVTRRLGELPGLTRKASKKSNPPGQHGQARRKR). The S4 RNA-binding domain maps to 90–152 (NRLDNVCFRL…KASKKLVEGN (63 aa)).

Belongs to the universal ribosomal protein uS4 family. In terms of assembly, part of the 30S ribosomal subunit. Contacts protein S5. The interaction surface between S4 and S5 is involved in control of translational fidelity.

Its function is as follows. One of the primary rRNA binding proteins, it binds directly to 16S rRNA where it nucleates assembly of the body of the 30S subunit. With S5 and S12 plays an important role in translational accuracy. The protein is Small ribosomal subunit protein uS4 of Prochlorococcus marinus (strain MIT 9312).